Here is a 774-residue protein sequence, read N- to C-terminus: Probable E3 ubiquitin-protein ligase HECTD2 (774 aa).

A disordered region spans residues 1 to 51; the sequence is MSEAARDLSPGAPPAVAAAAPEERKGKEPEREKLPPIVTAGAAAGLDRGSK. At serine 9 the chain carries Phosphoserine. The span at 21-34 shows a compositional bias: basic and acidic residues; sequence PEERKGKEPEREKL. Residues 435–774 form the HECT domain; sequence KRADLKKKLK…ISNSEGFGLE (340 aa). Catalysis depends on cysteine 742, which acts as the Glycyl thioester intermediate.

The catalysed reaction is S-ubiquitinyl-[E2 ubiquitin-conjugating enzyme]-L-cysteine + [acceptor protein]-L-lysine = [E2 ubiquitin-conjugating enzyme]-L-cysteine + N(6)-ubiquitinyl-[acceptor protein]-L-lysine.. Its pathway is protein modification; protein ubiquitination. Functionally, E3 ubiquitin-protein ligase which accepts ubiquitin from an E2 ubiquitin-conjugating enzyme in the form of a thioester and then directly transfers the ubiquitin to targeted substrates. This is Probable E3 ubiquitin-protein ligase HECTD2 (Hectd2) from Mus musculus (Mouse).